The sequence spans 288 residues: Glycine--tRNA ligase alpha subunit (288 aa).

This sequence belongs to the class-II aminoacyl-tRNA synthetase family. Tetramer of two alpha and two beta subunits.

The protein resides in the cytoplasm. The enzyme catalyses tRNA(Gly) + glycine + ATP = glycyl-tRNA(Gly) + AMP + diphosphate. The chain is Glycine--tRNA ligase alpha subunit from Rickettsia rickettsii (strain Iowa).